The following is a 502-amino-acid chain: Probable RNA exonuclease C9B6.11c (502 aa).

The disordered stretch occupies residues 338–379 (SELEEKNASTKTENDSNEDDKEECQSSSTSSVPESTASTPKK). Residues 341 to 351 (EEKNASTKTEN) show a composition bias toward basic and acidic residues. The segment covering 363-376 (SSSTSSVPESTAST) has biased composition (low complexity).

This sequence belongs to the CCR4/nocturin family.

It is found in the cytoplasm. The protein resides in the nucleus. The sequence is that of Probable RNA exonuclease C9B6.11c from Schizosaccharomyces pombe (strain 972 / ATCC 24843) (Fission yeast).